Reading from the N-terminus, the 465-residue chain is Probable Xaa-Pro aminopeptidase pepP (465 aa).

Residues Asp261, Asp272, Glu395, and Glu435 each coordinate Mn(2+).

It belongs to the peptidase M24B family. Requires Mn(2+) as cofactor.

The catalysed reaction is Release of any N-terminal amino acid, including proline, that is linked to proline, even from a dipeptide or tripeptide.. Its function is as follows. Catalyzes the removal of a penultimate prolyl residue from the N-termini of peptides. The protein is Probable Xaa-Pro aminopeptidase pepP (pepP) of Talaromyces marneffei (strain ATCC 18224 / CBS 334.59 / QM 7333) (Penicillium marneffei).